The primary structure comprises 273 residues: Putative phosphoenolpyruvate synthase regulatory protein (273 aa).

An ADP-binding site is contributed by 154–161 (GVSRSGKT).

This sequence belongs to the pyruvate, phosphate/water dikinase regulatory protein family. PSRP subfamily.

The enzyme catalyses [pyruvate, water dikinase] + ADP = [pyruvate, water dikinase]-phosphate + AMP + H(+). The catalysed reaction is [pyruvate, water dikinase]-phosphate + phosphate + H(+) = [pyruvate, water dikinase] + diphosphate. Functionally, bifunctional serine/threonine kinase and phosphorylase involved in the regulation of the phosphoenolpyruvate synthase (PEPS) by catalyzing its phosphorylation/dephosphorylation. This Halorhodospira halophila (strain DSM 244 / SL1) (Ectothiorhodospira halophila (strain DSM 244 / SL1)) protein is Putative phosphoenolpyruvate synthase regulatory protein.